The sequence spans 221 residues: Thymidylate kinase (221 aa).

11–18 (GPDGAGKT) contacts ATP.

This sequence belongs to the thymidylate kinase family.

It catalyses the reaction dTMP + ATP = dTDP + ADP. Phosphorylation of dTMP to form dTDP in both de novo and salvage pathways of dTTP synthesis. This is Thymidylate kinase from Lactiplantibacillus plantarum (strain ATCC BAA-793 / NCIMB 8826 / WCFS1) (Lactobacillus plantarum).